A 460-amino-acid chain; its full sequence is tRNA modification GTPase MnmE (460 aa).

Positions 23, 86, and 126 each coordinate (6S)-5-formyl-5,6,7,8-tetrahydrofolate. Residues G222 to F381 form the TrmE-type G domain. N232 contributes to the K(+) binding site. Residues N232 to S237, T251 to T257, and D276 to G279 each bind GTP. S236 is a Mg(2+) binding site. K(+) is bound by residues T251, I253, and T256. T257 contacts Mg(2+). K460 contacts (6S)-5-formyl-5,6,7,8-tetrahydrofolate.

This sequence belongs to the TRAFAC class TrmE-Era-EngA-EngB-Septin-like GTPase superfamily. TrmE GTPase family. As to quaternary structure, homodimer. Heterotetramer of two MnmE and two MnmG subunits. The cofactor is K(+).

The protein localises to the cytoplasm. In terms of biological role, exhibits a very high intrinsic GTPase hydrolysis rate. Involved in the addition of a carboxymethylaminomethyl (cmnm) group at the wobble position (U34) of certain tRNAs, forming tRNA-cmnm(5)s(2)U34. This Exiguobacterium sibiricum (strain DSM 17290 / CCUG 55495 / CIP 109462 / JCM 13490 / 255-15) protein is tRNA modification GTPase MnmE.